The sequence spans 53 residues: MEDKHGIKDKVAGKLKEVEGKITGDKAREVEGKAQQAKGKVKSKATEVKEDLE.

Positions 27–53 are disordered; that stretch reads AREVEGKAQQAKGKVKSKATEVKEDLE. The segment covering 44–53 has biased composition (basic and acidic residues); it reads KATEVKEDLE.

This sequence belongs to the UPF0337 (CsbD) family.

In Lactobacillus johnsonii (strain CNCM I-12250 / La1 / NCC 533), this protein is UPF0337 protein LJ_0034.1.